Reading from the N-terminus, the 127-residue chain is Large ribosomal subunit protein bL17 (127 aa).

It belongs to the bacterial ribosomal protein bL17 family. Part of the 50S ribosomal subunit. Contacts protein L32.

The chain is Large ribosomal subunit protein bL17 from Limosilactobacillus reuteri (strain DSM 20016) (Lactobacillus reuteri).